An 888-amino-acid chain; its full sequence is Leucine--tRNA ligase (888 aa).

The short motif at 43-53 (PYPSGRIHMGH) is the 'HIGH' region element. Positions 644–648 (KMSKS) match the 'KMSKS' region motif. Residue lysine 647 participates in ATP binding.

The protein belongs to the class-I aminoacyl-tRNA synthetase family.

It is found in the cytoplasm. The catalysed reaction is tRNA(Leu) + L-leucine + ATP = L-leucyl-tRNA(Leu) + AMP + diphosphate. The polypeptide is Leucine--tRNA ligase (Rhodopseudomonas palustris (strain BisA53)).